Consider the following 344-residue polypeptide: Biotin synthase (344 aa).

Positions 40–267 constitute a Radical SAM core domain; that stretch reads AQVQVSTLLS…KSMVRLSAGR (228 aa). The [4Fe-4S] cluster site is built by Cys-55, Cys-59, and Cys-62. Positions 99, 130, 190, and 262 each coordinate [2Fe-2S] cluster.

The protein belongs to the radical SAM superfamily. Biotin synthase family. As to quaternary structure, homodimer. [4Fe-4S] cluster serves as cofactor. Requires [2Fe-2S] cluster as cofactor.

It catalyses the reaction (4R,5S)-dethiobiotin + (sulfur carrier)-SH + 2 reduced [2Fe-2S]-[ferredoxin] + 2 S-adenosyl-L-methionine = (sulfur carrier)-H + biotin + 2 5'-deoxyadenosine + 2 L-methionine + 2 oxidized [2Fe-2S]-[ferredoxin]. It participates in cofactor biosynthesis; biotin biosynthesis; biotin from 7,8-diaminononanoate: step 2/2. Catalyzes the conversion of dethiobiotin (DTB) to biotin by the insertion of a sulfur atom into dethiobiotin via a radical-based mechanism. The protein is Biotin synthase of Xanthomonas axonopodis pv. citri (strain 306).